A 604-amino-acid polypeptide reads, in one-letter code: Elongation factor 4 (604 aa).

In terms of domain architecture, tr-type G spans 7-189 (KRIRNFCIIA…SVVDRVPPPA (183 aa)). Residues 19–24 (DHGKST) and 136–139 (NKID) each bind GTP.

It belongs to the TRAFAC class translation factor GTPase superfamily. Classic translation factor GTPase family. LepA subfamily.

The protein localises to the cell inner membrane. It carries out the reaction GTP + H2O = GDP + phosphate + H(+). Required for accurate and efficient protein synthesis under certain stress conditions. May act as a fidelity factor of the translation reaction, by catalyzing a one-codon backward translocation of tRNAs on improperly translocated ribosomes. Back-translocation proceeds from a post-translocation (POST) complex to a pre-translocation (PRE) complex, thus giving elongation factor G a second chance to translocate the tRNAs correctly. Binds to ribosomes in a GTP-dependent manner. The protein is Elongation factor 4 of Synechococcus sp. (strain CC9311).